The chain runs to 194 residues: ATP-dependent Clp protease proteolytic subunit (194 aa).

The active-site Nucleophile is S98. The active site involves H123.

It belongs to the peptidase S14 family. Fourteen ClpP subunits assemble into 2 heptameric rings which stack back to back to give a disk-like structure with a central cavity, resembling the structure of eukaryotic proteasomes.

Its subcellular location is the cytoplasm. The enzyme catalyses Hydrolysis of proteins to small peptides in the presence of ATP and magnesium. alpha-casein is the usual test substrate. In the absence of ATP, only oligopeptides shorter than five residues are hydrolyzed (such as succinyl-Leu-Tyr-|-NHMec, and Leu-Tyr-Leu-|-Tyr-Trp, in which cleavage of the -Tyr-|-Leu- and -Tyr-|-Trp bonds also occurs).. Its function is as follows. Cleaves peptides in various proteins in a process that requires ATP hydrolysis. Has a chymotrypsin-like activity. Plays a major role in the degradation of misfolded proteins. The protein is ATP-dependent Clp protease proteolytic subunit of Aliarcobacter butzleri (strain RM4018) (Arcobacter butzleri).